The primary structure comprises 292 residues: Elongation factor Ts (292 aa).

The interval 82 to 85 is involved in Mg(2+) ion dislocation from EF-Tu; sequence TDFV.

It belongs to the EF-Ts family.

It localises to the cytoplasm. Associates with the EF-Tu.GDP complex and induces the exchange of GDP to GTP. It remains bound to the aminoacyl-tRNA.EF-Tu.GTP complex up to the GTP hydrolysis stage on the ribosome. The protein is Elongation factor Ts of Bordetella bronchiseptica (strain ATCC BAA-588 / NCTC 13252 / RB50) (Alcaligenes bronchisepticus).